The following is a 171-amino-acid chain: Small ribosomal subunit protein uS13 (171 aa).

The interval 128 to 171 is disordered; that stretch reads HERGQKVRGQRTKSTGRTEGTIGVNVEAIKEEQAEDDAADGGEE. A compositionally biased stretch (acidic residues) spans 160–171; that stretch reads QAEDDAADGGEE.

Belongs to the universal ribosomal protein uS13 family. As to quaternary structure, part of the 30S ribosomal subunit. Forms a loose heterodimer with protein S19. Forms two bridges to the 50S subunit in the 70S ribosome.

Functionally, located at the top of the head of the 30S subunit, it contacts several helices of the 16S rRNA. In the 70S ribosome it contacts the 23S rRNA (bridge B1a) and protein L5 of the 50S subunit (bridge B1b), connecting the 2 subunits; these bridges are implicated in subunit movement. The protein is Small ribosomal subunit protein uS13 of Halobacterium salinarum (strain ATCC 700922 / JCM 11081 / NRC-1) (Halobacterium halobium).